Consider the following 104-residue polypeptide: Ribonuclease P protein component 4 (104 aa).

Zn(2+) is bound by residues cysteine 57, cysteine 60, cysteine 83, and cysteine 86.

The protein belongs to the eukaryotic/archaeal RNase P protein component 4 family. In terms of assembly, consists of a catalytic RNA component and at least 4-5 protein subunits. Requires Zn(2+) as cofactor.

It localises to the cytoplasm. It carries out the reaction Endonucleolytic cleavage of RNA, removing 5'-extranucleotides from tRNA precursor.. Functionally, part of ribonuclease P, a protein complex that generates mature tRNA molecules by cleaving their 5'-ends. This chain is Ribonuclease P protein component 4, found in Saccharolobus islandicus (strain M.16.27) (Sulfolobus islandicus).